The primary structure comprises 789 residues: Trimethylamine-oxide aldolase (789 aa).

In the C-terminal section; belongs to the GcvT family.

The enzyme catalyses trimethylamine N-oxide + H(+) = dimethylamine + formaldehyde. Its function is as follows. Catalyzes the conversion of trimethylamine N-oxide (TMAO) to dimethylamine (DMA) and formaldehyde. This chain is Trimethylamine-oxide aldolase, found in Ruegeria pomeroyi (strain ATCC 700808 / DSM 15171 / DSS-3) (Silicibacter pomeroyi).